Consider the following 320-residue polypeptide: Sensor histidine kinase YbdK (320 aa).

The helical transmembrane segment at 1–21 (MLLFTAVISVPMLLLAVSVLM) threads the bilayer. The Extracellular portion of the chain corresponds to 22-41 (SVIYDSMFKPMNHGMPFHRS). The helical transmembrane segment at 42–62 (FAYPAMIVVFLISLLLLAFLF) threads the bilayer. The Cytoplasmic segment spans residues 63 to 320 (SKSIHSLLHK…NGTGFLFSKE (258 aa)). The region spanning 67–120 (HSLLHKINLLNQTIRHLASDQRVPDKIEVKRADEIGELIKSVNLLIERTTYREL) is the HAMP domain. Residues 135–320 (KLRHDINTPL…NGTGFLFSKE (186 aa)) enclose the Histidine kinase domain. H138 is subject to Phosphohistidine; by autocatalysis.

Its subcellular location is the cell membrane. The enzyme catalyses ATP + protein L-histidine = ADP + protein N-phospho-L-histidine.. Its function is as follows. Member of the two-component regulatory system YbdK/YbdJ. Probably activates YbdJ by phosphorylation. The sequence is that of Sensor histidine kinase YbdK (ybdK) from Bacillus subtilis (strain 168).